A 149-amino-acid chain; its full sequence is Calmodulin (149 aa).

Position 2 is an N-acetylalanine (A2). 4 consecutive EF-hand domains span residues 8 to 43 (EQIA…LGQN), 44 to 79 (PTEA…KMKD), 81 to 116 (DSEE…LGEK), and 117 to 149 (LTDE…MMSK). Ca(2+) is bound by residues D21, D23, D25, T27, E32, D57, D59, N61, T63, E68, D94, D96, N98, and E105. K116 is subject to N6,N6,N6-trimethyllysine. Ca(2+) is bound by residues D130, D132, D134, Q136, and E141.

The protein belongs to the calmodulin family.

In terms of biological role, calmodulin mediates the control of a large number of enzymes, ion channels and other proteins by Ca(2+). Among the enzymes to be stimulated by the calmodulin-Ca(2+) complex are a number of protein kinases and phosphatases. This is Calmodulin from Lumbricus rubellus (Humus earthworm).